The following is a 327-amino-acid chain: GMP reductase (327 aa).

Residue Cys-175 is the Thioimidate intermediate of the active site. 204–227 (IIADGGIRTNGDVAKSIRFGATMV) lines the NADP(+) pocket.

The protein belongs to the IMPDH/GMPR family. GuaC type 2 subfamily.

It catalyses the reaction IMP + NH4(+) + NADP(+) = GMP + NADPH + 2 H(+). In terms of biological role, catalyzes the irreversible NADPH-dependent deamination of GMP to IMP. It functions in the conversion of nucleobase, nucleoside and nucleotide derivatives of G to A nucleotides, and in maintaining the intracellular balance of A and G nucleotides. In Bacillus anthracis, this protein is GMP reductase.